Consider the following 221-residue polypeptide: Small ribosomal subunit protein uS3c (221 aa).

The 71-residue stretch at L39–A109 folds into the KH type-2 domain.

Belongs to the universal ribosomal protein uS3 family. Part of the 30S ribosomal subunit.

It is found in the plastid. Its subcellular location is the chloroplast. The sequence is that of Small ribosomal subunit protein uS3c (rps3) from Nephroselmis olivacea (Green alga).